Reading from the N-terminus, the 245-residue chain is MTLYEPFLERAQQVLTRRLELAPYPIPVGFERKEALVRGEAVVTTSTAWQSPKLRQIRAAHVQGGGALQVLNFVISPRLEYDLPFFGADLVTLPGGHLIALDMQPLFRDDPAYQAKYTEPIVPLFEAHRAHLEWGGDFPEEARPFFSPAFLWTRPKETGTVETRVFAAFVDYLNAYLDFVERAEPVTHPEGLAAVERAQLRYLHYRAEKDPARGMFRRFYGPEWTEEYIHGFLFDLERRREAVHR.

Belongs to the HY2 family.

The catalysed reaction is (3Z)-phycoerythrobilin + oxidized 2[4Fe-4S]-[ferredoxin] = 15,16-dihydrobiliverdin + reduced 2[4Fe-4S]-[ferredoxin] + 2 H(+). In terms of biological role, catalyzes the two-electron reduction of the C2 and C3(1) diene system of 15,16-dihydrobiliverdin. In Gloeobacter violaceus (strain ATCC 29082 / PCC 7421), this protein is Phycoerythrobilin:ferredoxin oxidoreductase (pebB).